We begin with the raw amino-acid sequence, 682 residues long: Potassium-transporting ATPase ATP-binding subunit (682 aa).

A run of 4 helical transmembrane segments spans residues 34 to 54 (PVMFIVWIGSLLTTCISIAMA), 62 to 82 (ALFSAAISGWLWITVLFANFA), 219 to 239 (IALTILLIALTIVFLLATATL), and 254 to 274 (VLVALLVCLIPTTIGGLLSAI). The 4-aspartylphosphate intermediate role is filled by D307. Residues D344, E348, 377 to 384 (FTAQSRMS), and K395 each bind ATP. Positions 518 and 522 each coordinate Mg(2+). Helical transmembrane passes span 588-608 (FAIIPAAFAATYPQLNALNIM), 616-636 (AILSAVIFNALIIVFLIPLAL), and 656-676 (IYGLGGLLVPFIGIKVIDLLL).

The protein belongs to the cation transport ATPase (P-type) (TC 3.A.3) family. Type IA subfamily. As to quaternary structure, the system is composed of three essential subunits: KdpA, KdpB and KdpC.

The protein localises to the cell inner membrane. The enzyme catalyses K(+)(out) + ATP + H2O = K(+)(in) + ADP + phosphate + H(+). In terms of biological role, part of the high-affinity ATP-driven potassium transport (or Kdp) system, which catalyzes the hydrolysis of ATP coupled with the electrogenic transport of potassium into the cytoplasm. This subunit is responsible for energy coupling to the transport system and for the release of the potassium ions to the cytoplasm. This Escherichia coli (strain K12 / MC4100 / BW2952) protein is Potassium-transporting ATPase ATP-binding subunit.